Here is a 207-residue protein sequence, read N- to C-terminus: Ribosomal RNA small subunit methyltransferase G (207 aa).

Residues G73, L78, 124–125 (VE), and R139 each bind S-adenosyl-L-methionine.

Belongs to the methyltransferase superfamily. RNA methyltransferase RsmG family.

The protein resides in the cytoplasm. It catalyses the reaction guanosine(527) in 16S rRNA + S-adenosyl-L-methionine = N(7)-methylguanosine(527) in 16S rRNA + S-adenosyl-L-homocysteine. Specifically methylates the N7 position of guanine in position 527 of 16S rRNA. In Shigella flexneri, this protein is Ribosomal RNA small subunit methyltransferase G.